We begin with the raw amino-acid sequence, 683 residues long: Methionine--tRNA ligase (683 aa).

Positions 15 to 25 (PYANGPIHLGH) match the 'HIGH' region motif. Zn(2+) is bound by residues C146, C149, C159, and C162. The short motif at 332 to 336 (KMSKS) is the 'KMSKS' region element. Residue K335 coordinates ATP. One can recognise a tRNA-binding domain in the interval 581–683 (DFCKVDLRVA…AGAKAGQRVK (103 aa)).

The protein belongs to the class-I aminoacyl-tRNA synthetase family. MetG type 1 subfamily. As to quaternary structure, homodimer. Requires Zn(2+) as cofactor.

The protein resides in the cytoplasm. It catalyses the reaction tRNA(Met) + L-methionine + ATP = L-methionyl-tRNA(Met) + AMP + diphosphate. Is required not only for elongation of protein synthesis but also for the initiation of all mRNA translation through initiator tRNA(fMet) aminoacylation. This Histophilus somni (strain 2336) (Haemophilus somnus) protein is Methionine--tRNA ligase.